A 354-amino-acid chain; its full sequence is Uroporphyrinogen decarboxylase (354 aa).

Substrate-binding positions include R27–R31, D77, Y154, T209, and H327.

This sequence belongs to the uroporphyrinogen decarboxylase family. Homodimer.

It localises to the cytoplasm. It carries out the reaction uroporphyrinogen III + 4 H(+) = coproporphyrinogen III + 4 CO2. It functions in the pathway porphyrin-containing compound metabolism; protoporphyrin-IX biosynthesis; coproporphyrinogen-III from 5-aminolevulinate: step 4/4. In terms of biological role, catalyzes the decarboxylation of four acetate groups of uroporphyrinogen-III to yield coproporphyrinogen-III. The protein is Uroporphyrinogen decarboxylase of Cronobacter sakazakii (strain ATCC BAA-894) (Enterobacter sakazakii).